The sequence spans 296 residues: ATP synthase gamma chain (296 aa).

The protein belongs to the ATPase gamma chain family. As to quaternary structure, F-type ATPases have 2 components, CF(1) - the catalytic core - and CF(0) - the membrane proton channel. CF(1) has five subunits: alpha(3), beta(3), gamma(1), delta(1), epsilon(1). CF(0) has three main subunits: a, b and c.

Its subcellular location is the cell inner membrane. Produces ATP from ADP in the presence of a proton gradient across the membrane. The gamma chain is believed to be important in regulating ATPase activity and the flow of protons through the CF(0) complex. This chain is ATP synthase gamma chain, found in Gluconobacter oxydans (strain 621H) (Gluconobacter suboxydans).